A 219-amino-acid chain; its full sequence is Type-5 uracil-DNA glycosylase (219 aa).

Residues C13, C16, C115, and C130 each coordinate [4Fe-4S] cluster.

It belongs to the uracil-DNA glycosylase (UDG) superfamily. Type 5 (UDGb) family.

DNA glycosylase with broad substrate specificity. Can remove uracil from double-stranded DNA containing either a U/G, U/A, U/C or U/T base pair. Can also excise hypoxanthine from double-stranded DNA containing G/I, T/I, and A/I base pairs, xanthine from both double-stranded and single stranded DNA, thymine from G/T mismatched DNA, 5'-hydroxymethyluracil and 5'-fluorouracil. The polypeptide is Type-5 uracil-DNA glycosylase (Thermus thermophilus (strain ATCC 27634 / DSM 579 / HB8)).